Reading from the N-terminus, the 258-residue chain is Phosphate import ATP-binding protein PstB 1 (258 aa).

Residues 5 to 247 form the ABC transporter domain; that stretch reads LDLTDVNIYY…EKIFSNPNQK (243 aa). An ATP-binding site is contributed by 37–44; the sequence is GPSGCGKT.

The protein belongs to the ABC transporter superfamily. Phosphate importer (TC 3.A.1.7) family. In terms of assembly, the complex is composed of two ATP-binding proteins (PstB), two transmembrane proteins (PstC and PstA) and a solute-binding protein (PstS).

The protein localises to the cell membrane. The catalysed reaction is phosphate(out) + ATP + H2O = ADP + 2 phosphate(in) + H(+). Part of the ABC transporter complex PstSACB involved in phosphate import. Responsible for energy coupling to the transport system. This Mycobacterium bovis (strain ATCC BAA-935 / AF2122/97) protein is Phosphate import ATP-binding protein PstB 1.